Reading from the N-terminus, the 632-residue chain is Transcription factor tazR (632 aa).

Positions 20–47 (CNECRARKLRCDRVRPTCGTCESLGVTC) form a DNA-binding region, zn(2)-C6 fungal-type. A disordered region spans residues 77–130 (WNGQQKAAGGSPGESPPCSEGGQTLRAVSESTSDGVHDEDHANGARPPSSQSSI).

Its subcellular location is the nucleus. In terms of biological role, transcription factor that regulates the expression of the gene cluster that mediates the biosynthesis of azaterrilone A and other azaphilones, a class of fungal metabolites characterized by a highly oxygenated pyrano-quinone bicyclic core and exhibiting a broad range of bioactivities. The protein is Transcription factor tazR of Aspergillus terreus (strain NIH 2624 / FGSC A1156).